Here is a 95-residue protein sequence, read N- to C-terminus: Integration host factor subunit beta (95 aa).

The protein belongs to the bacterial histone-like protein family. As to quaternary structure, heterodimer of an alpha and a beta chain.

Functionally, this protein is one of the two subunits of integration host factor, a specific DNA-binding protein that functions in genetic recombination as well as in transcriptional and translational control. This chain is Integration host factor subunit beta, found in Shewanella putrefaciens (strain CN-32 / ATCC BAA-453).